The following is a 70-amino-acid chain: Small ribosomal subunit protein bS21A (70 aa).

The protein belongs to the bacterial ribosomal protein bS21 family.

This chain is Small ribosomal subunit protein bS21A, found in Paraburkholderia xenovorans (strain LB400).